A 450-amino-acid polypeptide reads, in one-letter code: Benzene 1,2-dioxygenase subunit alpha (450 aa).

The Rieske domain maps to 56 to 163 (LLGHETHIRK…VETYKGLIFA (108 aa)). The [2Fe-2S] cluster site is built by C96, H98, C116, and H119. Positions 222 and 228 each coordinate Fe cation.

Belongs to the bacterial ring-hydroxylating dioxygenase alpha subunit family. This dioxygenase system consists of four proteins: the two subunits of the hydroxylase component (BedC1 and BedC2), a ferredoxin (BedB) and a ferredoxin reductase (BedA). [2Fe-2S] cluster serves as cofactor. The cofactor is Fe cation.

The enzyme catalyses benzene + NADH + O2 + H(+) = cis-1,2-dihydrobenzene-1,2-diol + NAD(+). It participates in aromatic compound metabolism; benzene degradation; catechol from benzene: step 1/2. This is Benzene 1,2-dioxygenase subunit alpha (bedC1) from Pseudomonas putida (Arthrobacter siderocapsulatus).